The sequence spans 765 residues: MASHIVGYPRMGPKRELKFALESFWDGKSSADDLQKVSADLRSDIWKQMSAAGIKYIPSNTFSHYDQVLDTTAMLGAVPSRYGFTSGEIGLDVYFSMARGNASVPAMEMTKWFDTNYHYIVPELGPEVKFSYASHKAVNEYKEAKALGVETVPVLVGPVSYLLLSKLAKGVDKSFDLLSLLPKILPVYKEVIAELKAAGASWIQLDEPLFVMDLEGHKLQAFSGAYAELESTLSGLNVLVETYFADIPAEAYKTLTSLKGVTAFGFDLVRGTKTIDLIKSGFPQGKYLFAGVVDGRNIWANDLAASLITLQSLEGVVGKDKLVVSTSCSLLHTAVDLINETKLDAEIKSWLAFAAQKVVEVDALAKALAGQTNESFFTANADALSSRRSSPRVTNESVQKAAAALKGSDHRRTTEVSARLDAQQKKLNLPILPTTTIGSFPQTVELRRVRREYKAKKISEEDYVKAIKEEIKKVVDIQEDLDIDVLVHGEPERNDMVEYFGEQLSGFAFTANGWVQSYGSRCVKPPVIYGDVSRPKPMTVFWSSTAQSMTKRPMKGMLTGPVTILNWSFVRNDQPRHETCYQIALAIKDEVEDLEKGGIGVIQIDEAALREGLPLRKAEHSFYLDWAVHSFRITNCGVQDSTQIHTHMCYSNFNDIIHSIIDMDADVITIENSRSDEKLLSVFREGVKYGAGIGPGVYDIHSPRIPSTDEIADRINKMLAVLEQNILWVNPDCGLKTRKYTEVKPALKAMVDAAKLIRSQLGSAK.

Residues lysine 18 and asparagine 116 each coordinate 5-methyltetrahydropteroyltri-L-glutamate. L-homocysteine is bound by residues 437–439 and glutamate 490; that span reads IGS. Residues 437–439 and glutamate 490 contribute to the L-methionine site; that span reads IGS. Residues aspartate 495, tyrosine 518, 521–522, and tryptophan 567 contribute to the 5-methyltetrahydropteroyltri-L-glutamate site; that span reads RC. Residue aspartate 605 coordinates L-homocysteine. Aspartate 605 contributes to the L-methionine binding site. Zn(2+)-binding residues include histidine 647, cysteine 649, histidine 658, aspartate 662, and glutamate 671. Histidine 701 acts as the Proton donor in catalysis. Position 733 (cysteine 733) interacts with Zn(2+).

It belongs to the vitamin-B12 independent methionine synthase family. Zn(2+) is required as a cofactor. In terms of tissue distribution, expressed in leaves, stems and siliques.

It is found in the cytoplasm. The protein localises to the cytosol. It carries out the reaction 5-methyltetrahydropteroyltri-L-glutamate + L-homocysteine = tetrahydropteroyltri-L-glutamate + L-methionine. It functions in the pathway amino-acid biosynthesis; L-methionine biosynthesis via de novo pathway; L-methionine from L-homocysteine (MetE route): step 1/1. Its function is as follows. Catalyzes the transfer of a methyl group from 5-methyltetrahydrofolate to homocysteine resulting in methionine formation. The sequence is that of 5-methyltetrahydropteroyltriglutamate--homocysteine methyltransferase 2 (MS2) from Arabidopsis thaliana (Mouse-ear cress).